We begin with the raw amino-acid sequence, 341 residues long: Phosphoribosylformylglycinamidine cyclo-ligase (341 aa).

This sequence belongs to the AIR synthase family.

Its subcellular location is the cytoplasm. The catalysed reaction is 2-formamido-N(1)-(5-O-phospho-beta-D-ribosyl)acetamidine + ATP = 5-amino-1-(5-phospho-beta-D-ribosyl)imidazole + ADP + phosphate + H(+). The protein operates within purine metabolism; IMP biosynthesis via de novo pathway; 5-amino-1-(5-phospho-D-ribosyl)imidazole from N(2)-formyl-N(1)-(5-phospho-D-ribosyl)glycinamide: step 2/2. This is Phosphoribosylformylglycinamidine cyclo-ligase from Xanthomonas campestris pv. campestris (strain 8004).